The primary structure comprises 381 residues: Creatine kinase M-type (381 aa).

The Phosphagen kinase N-terminal domain maps to 11–98 (KLKFSAEEEF…FDPVIQDRHG (88 aa)). The segment at 99-118 (GYKPTDKHRTDLNHENLKGG) is disordered. Positions 125–367 (YVLSSRVRTG…KLMVEMEKKL (243 aa)) constitute a Phosphagen kinase C-terminal domain. ATP contacts are provided by residues 128–132 (SSRVR), His-191, Arg-236, Arg-292, 320–325 (RGTGGV), and Asp-335.

The protein belongs to the ATP:guanido phosphotransferase family. Dimer of identical or non-identical chains, which can be either B (brain type) or M (muscle type). With MM being the major form in skeletal muscle and myocardium, MB existing in myocardium, and BB existing in many tissues, especially brain. In terms of tissue distribution, predominantly found in skeletal muscle, but not in the heart.

Its subcellular location is the cytoplasm. The enzyme catalyses creatine + ATP = N-phosphocreatine + ADP + H(+). In terms of biological role, reversibly catalyzes the transfer of phosphate between ATP and various phosphogens (e.g. creatine phosphate). Creatine kinase isoenzymes play a central role in energy transduction in tissues with large, fluctuating energy demands, such as skeletal muscle, heart, brain and spermatozoa. The chain is Creatine kinase M-type from Gallus gallus (Chicken).